A 203-amino-acid chain; its full sequence is MKLRWFAFLIVLLAGCSSKHDYTNPPWNAKVPVQRAMQWMPISQKAGAAWGVDPQLITAIIAIESGGNPNAVSKSNAIGLMQLKASTSGRDVYRRMGWSGEPTTSELKNPERNISMGAAYLNILETGPLAGIEDPKVLQYALVVSYANGAGVLLRTFSSDRKKAISKINDLDADEFLDHVARNHPAPQAPRYIYKLEQALDAM.

Residues 1–15 form the signal peptide; that stretch reads MKLRWFAFLIVLLAG. Cysteine 16 carries the N-palmitoyl cysteine lipid modification. A lipid anchor (S-diacylglycerol cysteine) is attached at cysteine 16.

It belongs to the transglycosylase Slt family.

It is found in the cell outer membrane. The catalysed reaction is Endolytic cleavage of the (1-&gt;4)-beta-glycosidic linkage between N-acetylmuramic acid (MurNAc) and N-acetylglucosamine (GlcNAc) residues in peptidoglycan with concomitant formation of a 1,6-anhydrobond in the MurNAc residue.. Murein-degrading enzyme. May play a role in recycling of muropeptides during cell elongation and/or cell division. Preferentially cleaves at a distance of more than two disaccharide units from the ends of the glycan chain. This Shigella dysenteriae serotype 1 (strain Sd197) protein is Endo-type membrane-bound lytic murein transglycosylase A.